A 112-amino-acid chain; its full sequence is Putative RNase TTE0752 (112 aa).

Residues R74 and H79 contribute to the active site. Positions 74-81 (RDKLIHEY) match the RX(4)HXY motif motif. At Y81 the chain carries O-di-AMP-tyrosine.

The protein belongs to the HepT RNase toxin family. In terms of assembly, homodimer, probably forms a complex with cognate antitoxin TTE0751. Modified by cognate antitoxin TTE0751; probably at least 2 successive AMPylation events occur on Tyr-81.

Its function is as follows. Probable toxic component of a putative type VII toxin-antitoxin (TA) system, probably an RNase. Probably neutralized by cognate antitoxin TTE0751. Neutralization may be due to AMPylation by TTE0751. The polypeptide is Putative RNase TTE0752 (Caldanaerobacter subterraneus subsp. tengcongensis (strain DSM 15242 / JCM 11007 / NBRC 100824 / MB4) (Thermoanaerobacter tengcongensis)).